A 593-amino-acid polypeptide reads, in one-letter code: MRTHYCSAVNELSLDKQITVCGWVHNRRDHGGVIFLDIRDRSGLLQVVYEPENKEIFAIAEKLRSEFVVRVTGIVRKRPEGMINDKMETGRVEVIGIQLEILNQSPTPPFLPDDHQIINEDLRYKYRYIDLRRAVMQKKLTLRHKLNSCIRNYLNEQNFLDIETPMLTKATPEGARDYLVPSRVHPGQFYALPQSPQLFKQLLMMSGFDKYYQIVRCFRDEDLRADRQPEFTQLDIEMAFINEEDILQLIEGLLKVVFKEILNITLPDKLPRMSYKEAMTRYGSDKPDLRNPLELIDIADLVKDCDFNVFASAANDNSGRVVALKLPNGCDLSRKDLDNYGQFVTIYGAKGLAYIKVNDLSAGMAGLQSPILKFLSETAVQSILNRVEAQTGDVIFFGADKAHVVNESMGALRNKLGHDRNLINPGWQLLWVIDWPMFELDPQSNKLQPMHHPFTSPQELSAEALRSKPTQTLAKAYDIVINGYEIGGGSIRIHQPELQKTVFDLIGIDEQEAHEKFGFLLDALQYGAPPHGGIALGIDRLAMLLTDSTSIRDVIAFPKTQTASCPLTSAPSPAGNAQLTELGIRLAPTITTK.

Position 173 (glutamate 173) interacts with L-aspartate. The interval 197–200 (QLFK) is aspartate. Arginine 219 contacts L-aspartate. ATP is bound by residues 219–221 (RDE) and glutamine 228. L-aspartate is bound at residue histidine 451. ATP is bound at residue glutamate 485. Arginine 492 is a binding site for L-aspartate. 537–540 (GIDR) is a binding site for ATP.

This sequence belongs to the class-II aminoacyl-tRNA synthetase family. Type 1 subfamily. Homodimer.

It localises to the cytoplasm. The catalysed reaction is tRNA(Asx) + L-aspartate + ATP = L-aspartyl-tRNA(Asx) + AMP + diphosphate. In terms of biological role, aspartyl-tRNA synthetase with relaxed tRNA specificity since it is able to aspartylate not only its cognate tRNA(Asp) but also tRNA(Asn). Reaction proceeds in two steps: L-aspartate is first activated by ATP to form Asp-AMP and then transferred to the acceptor end of tRNA(Asp/Asn). In Legionella pneumophila (strain Paris), this protein is Aspartate--tRNA(Asp/Asn) ligase.